Here is a 64-residue protein sequence, read N- to C-terminus: DNA gyrase inhibitor YacG (64 aa).

Zn(2+) is bound by residues cysteine 9, cysteine 12, cysteine 28, and cysteine 32. Positions 42 to 64 are disordered; the sequence is DEENAIPGAPDMSDSDGWSEEQY. Residues 54–64 show a composition bias toward acidic residues; the sequence is SDSDGWSEEQY.

It belongs to the DNA gyrase inhibitor YacG family. In terms of assembly, interacts with GyrB. Zn(2+) serves as cofactor.

Inhibits all the catalytic activities of DNA gyrase by preventing its interaction with DNA. Acts by binding directly to the C-terminal domain of GyrB, which probably disrupts DNA binding by the gyrase. This is DNA gyrase inhibitor YacG from Vibrio vulnificus (strain CMCP6).